The chain runs to 233 residues: Sugar fermentation stimulation protein homolog (233 aa).

This sequence belongs to the SfsA family.

The polypeptide is Sugar fermentation stimulation protein homolog (Rhodospirillum centenum (strain ATCC 51521 / SW)).